A 231-amino-acid polypeptide reads, in one-letter code: MNDVVLSCKNVSKKYTEFKTDIAILKDVNLEIKKGEKVAILGLSGSGKTTLLNVLGGLDKCSAGEVYLMGERFDNQSVNKRAKMRNKHLGFIYQLHHLLPEFTAIENVMIPLAITKKYTKKESIKLANEILKKVGLDHRADHKPAELSGGERQRVAIARALVTNPNCILADEPTGNLDSQRSESIFALMQQLSDDFGISFVIVTHDEKLASRMNKIYRLVDGELELVINSN.

Residues 6 to 230 (LSCKNVSKKY…DGELELVINS (225 aa)) form the ABC transporter domain. 42–49 (GLSGSGKT) contacts ATP.

It belongs to the ABC transporter superfamily. Lipoprotein translocase (TC 3.A.1.125) family. As to quaternary structure, the complex is composed of two ATP-binding proteins (LolD) and two transmembrane proteins (LolC and LolE).

The protein resides in the cell inner membrane. Its function is as follows. Part of the ABC transporter complex LolCDE involved in the translocation of mature outer membrane-directed lipoproteins, from the inner membrane to the periplasmic chaperone, LolA. Responsible for the formation of the LolA-lipoprotein complex in an ATP-dependent manner. This chain is Lipoprotein-releasing system ATP-binding protein LolD, found in Francisella tularensis subsp. holarctica (strain OSU18).